The sequence spans 338 residues: MRIIGIETSCDETGIAIYDDEKGLLAHKLYSQVKLHADYGGVVPELASRDHVKKTIPLIKEALKEANLTSQDIDGVAYTAGPGLVGALLVGATIGRSIAYAWGVPAVPVHHMEGHLLAPMLEDNPPPFPFVAVLVSGGHSMMVEVKGIGEYKILGESIDDAAGEAFDKTAKLMGLDYPGGPLLSKLAEKGTPGRFKFPRPMTNVPGLDMSFSGLKTFTANTIAANGDDEQTRADIAYAFEEAVCATLAIKCKRALEQTGMKRIVIAGGVSANRRLRAELEKLAKKIGGEVYYPRTEFCTDNGAMIAYAGMQRLKNGEVADMSVEARPRWPIDQLTPIA.

2 residues coordinate Fe cation: His-111 and His-115. Residues 134 to 138 (LVSGG), Asp-167, Gly-180, and Asn-272 each bind substrate. Asp-300 serves as a coordination point for Fe cation.

This sequence belongs to the KAE1 / TsaD family. It depends on Fe(2+) as a cofactor.

It localises to the cytoplasm. It catalyses the reaction L-threonylcarbamoyladenylate + adenosine(37) in tRNA = N(6)-L-threonylcarbamoyladenosine(37) in tRNA + AMP + H(+). Its function is as follows. Required for the formation of a threonylcarbamoyl group on adenosine at position 37 (t(6)A37) in tRNAs that read codons beginning with adenine. Is involved in the transfer of the threonylcarbamoyl moiety of threonylcarbamoyl-AMP (TC-AMP) to the N6 group of A37, together with TsaE and TsaB. TsaD likely plays a direct catalytic role in this reaction. The chain is tRNA N6-adenosine threonylcarbamoyltransferase from Vibrio parahaemolyticus serotype O3:K6 (strain RIMD 2210633).